A 443-amino-acid chain; its full sequence is ATP-dependent protease ATPase subunit HslU (443 aa).

Residues isoleucine 19, 61 to 66, aspartate 256, glutamate 321, and arginine 393 each bind ATP; that span reads GVGKTE.

The protein belongs to the ClpX chaperone family. HslU subfamily. As to quaternary structure, a double ring-shaped homohexamer of HslV is capped on each side by a ring-shaped HslU homohexamer. The assembly of the HslU/HslV complex is dependent on binding of ATP.

It localises to the cytoplasm. Its function is as follows. ATPase subunit of a proteasome-like degradation complex; this subunit has chaperone activity. The binding of ATP and its subsequent hydrolysis by HslU are essential for unfolding of protein substrates subsequently hydrolyzed by HslV. HslU recognizes the N-terminal part of its protein substrates and unfolds these before they are guided to HslV for hydrolysis. In Cupriavidus pinatubonensis (strain JMP 134 / LMG 1197) (Cupriavidus necator (strain JMP 134)), this protein is ATP-dependent protease ATPase subunit HslU.